Consider the following 597-residue polypeptide: MHKYRTHTCGELSLAHVGLQVKLSGWLYRRRDHGGLLFIDLRDHYGIIQLVFNDDCSAVQAEISKIKFETVITVEGAVVARSNETINKNISTGDVEVVVSSYVVESFAEELPLQINGEYEAPEETRLKYRFLDLRGARLHQNIVLRSKVIQELRNQMLSNGFIEFQTPILTASSPEGARDFLVPSRLHPGKFYALPQAPQQFKQLIMMSGFDKYFQIAPCFRDEDARADRSPGEFYQLDIEMAFVTQEDVFGLVEPVLYNTFKKFSNYSITNIPFPRITYDESMLRYGSDKPDLRNPIQISDVTDIFQCSEFTTLKDSINCGAVVRAIPAPMSANKPRSFFDKMIEYAKHLGASGLAYIQFTNDGVKGSIAKFFDEALLARIKKLVKCQDGDAIFFICDKENDATKVAAKIRAKVGEELNIIKTDCYKFCWVIDFPFYQLDSEINKITFSHNPFSMPQGGIEAFNKAKTVEDLLSIKAFQYDIVCNGVELSSGAIRNHKPDLMYKAFAIVGYSKDEVDKQFGAMIRAFCYGAPPHGGIAPGIDRILMLLTNSVNIREVIAFPMNQQAEDLLMGCPAAVTDKQLHELQLKLISKERIK.

Glutamate 176 contributes to the L-aspartate binding site. Residues 200–203 (QQFK) are aspartate. The L-aspartate site is built by arginine 222 and histidine 451. 222–224 (RDE) contributes to the ATP binding site. Glutamate 489 contributes to the ATP binding site. Arginine 496 contributes to the L-aspartate binding site. 541 to 544 (GIDR) serves as a coordination point for ATP.

This sequence belongs to the class-II aminoacyl-tRNA synthetase family. Type 1 subfamily. In terms of assembly, homodimer.

The protein resides in the cytoplasm. It carries out the reaction tRNA(Asx) + L-aspartate + ATP = L-aspartyl-tRNA(Asx) + AMP + diphosphate. Aspartyl-tRNA synthetase with relaxed tRNA specificity since it is able to aspartylate not only its cognate tRNA(Asp) but also tRNA(Asn). Reaction proceeds in two steps: L-aspartate is first activated by ATP to form Asp-AMP and then transferred to the acceptor end of tRNA(Asp/Asn). The protein is Aspartate--tRNA(Asp/Asn) ligase of Orientia tsutsugamushi (strain Boryong) (Rickettsia tsutsugamushi).